The sequence spans 541 residues: Chaperonin GroEL 1 (541 aa).

Residues 30–33 (TLGP), 87–91 (DGTTT), Gly414, 478–480 (NAA), and Asp494 each bind ATP.

The protein belongs to the chaperonin (HSP60) family. As to quaternary structure, forms a cylinder of 14 subunits composed of two heptameric rings stacked back-to-back. Interacts with the co-chaperonin GroES.

The protein localises to the cytoplasm. The enzyme catalyses ATP + H2O + a folded polypeptide = ADP + phosphate + an unfolded polypeptide.. Functionally, together with its co-chaperonin GroES, plays an essential role in assisting protein folding. The GroEL-GroES system forms a nano-cage that allows encapsulation of the non-native substrate proteins and provides a physical environment optimized to promote and accelerate protein folding. This chain is Chaperonin GroEL 1, found in Thermobifida fusca (strain YX).